A 202-amino-acid chain; its full sequence is Holliday junction resolvase RecU (202 aa).

4 residues coordinate Mg(2+): T85, D87, E100, and Q119.

This sequence belongs to the RecU family. It depends on Mg(2+) as a cofactor.

It localises to the cytoplasm. The enzyme catalyses Endonucleolytic cleavage at a junction such as a reciprocal single-stranded crossover between two homologous DNA duplexes (Holliday junction).. In terms of biological role, endonuclease that resolves Holliday junction intermediates in genetic recombination. Cleaves mobile four-strand junctions by introducing symmetrical nicks in paired strands. Promotes annealing of linear ssDNA with homologous dsDNA. Required for DNA repair, homologous recombination and chromosome segregation. This Streptococcus equi subsp. zooepidemicus (strain MGCS10565) protein is Holliday junction resolvase RecU.